The sequence spans 462 residues: Trigger factor (462 aa).

The PPIase FKBP-type domain maps to Thr163–Pro259. Residues Ser439–Pro462 are disordered. Positions Gln448 to Pro462 are enriched in low complexity.

Belongs to the FKBP-type PPIase family. Tig subfamily.

It localises to the cytoplasm. The catalysed reaction is [protein]-peptidylproline (omega=180) = [protein]-peptidylproline (omega=0). In terms of biological role, involved in protein export. Acts as a chaperone by maintaining the newly synthesized protein in an open conformation. Functions as a peptidyl-prolyl cis-trans isomerase. The polypeptide is Trigger factor (Salinibacter ruber (strain DSM 13855 / M31)).